Reading from the N-terminus, the 59-residue chain is Thrombostatin (59 aa).

4 disulfides stabilise this stretch: Cys-3/Cys-22, Cys-17/Cys-37, Cys-39/Cys-51, and Cys-52/Cys-57. Positions 43 to 45 (RGD) match the Cell attachment site motif.

It belongs to the three-finger toxin family. Short-chain subfamily. Antiplatelet toxin sub-subfamily. As to expression, expressed by the venom gland.

It is found in the secreted. In terms of biological role, inhibits ADP-induced platelet aggregation and inhibits the binding of purified platelet fibrinogen receptor alpha-IIb/beta-3 (ITGA2B/ITGB3) to immobilized fibrinogen. The sequence is that of Thrombostatin from Dendroaspis angusticeps (Eastern green mamba).